A 183-amino-acid polypeptide reads, in one-letter code: Large ribosomal subunit protein uL6 (183 aa).

The protein belongs to the universal ribosomal protein uL6 family. As to quaternary structure, part of the 50S ribosomal subunit.

This protein binds to the 23S rRNA, and is important in its secondary structure. It is located near the subunit interface in the base of the L7/L12 stalk, and near the tRNA binding site of the peptidyltransferase center. In Malacoplasma penetrans (strain HF-2) (Mycoplasma penetrans), this protein is Large ribosomal subunit protein uL6.